We begin with the raw amino-acid sequence, 539 residues long: Hydroxylamine reductase (539 aa).

Positions 3, 6, 13, and 19 each coordinate [4Fe-4S] cluster. Residues His-240, Glu-264, Cys-308, Cys-395, Cys-423, Cys-448, Glu-482, and Lys-484 each coordinate hybrid [4Fe-2O-2S] cluster. Cys-395 is modified (cysteine persulfide).

The protein belongs to the HCP family. [4Fe-4S] cluster serves as cofactor. Requires hybrid [4Fe-2O-2S] cluster as cofactor.

It localises to the cytoplasm. It carries out the reaction A + NH4(+) + H2O = hydroxylamine + AH2 + H(+). In terms of biological role, catalyzes the reduction of hydroxylamine to form NH(3) and H(2)O. This Thermodesulfovibrio yellowstonii (strain ATCC 51303 / DSM 11347 / YP87) protein is Hydroxylamine reductase.